The chain runs to 644 residues: Transcription factor btd (644 aa).

Disordered regions lie at residues 16–65 (HQAQ…TQQQ) and 101–196 (APPS…AGSP). 2 stretches are compositionally biased toward low complexity: residues 101 to 119 (APPSLSGSSSGSSSGSSPL) and 140 to 196 (ASPN…AGSP). 3 C2H2-type zinc fingers span residues 333-357 (HICHIPGCERLYGKASHLKTHLRWH), 363-385 (FLCLTCGKRFSRSDELQRHGRTH), and 391-413 (YACPICSKKFSRSDHLSKHKKTH). 2 disordered regions span residues 437-461 (LEKKEKKSGKPLTPPVEFKQEQPDT) and 478-537 (TSAG…SSSA). Low complexity-rich tracts occupy residues 499–508 (TTTTSSAAAS) and 521–537 (AIQPATTSASSSSSSSA).

The protein localises to the nucleus. In terms of biological role, required for the development of the antennal, intercalary and mandibular segments of the head. This Drosophila melanogaster (Fruit fly) protein is Transcription factor btd (btd).